Consider the following 280-residue polypeptide: Truncated lectin 2 (280 aa).

Positions 1-26 (MSSSNFSCILSISLTFFILLLNKVNS) are cleaved as a signal peptide. 2 residues coordinate Mn(2+): E148 and D150. 4 residues coordinate Ca(2+): D150, F152, N154, and D158. D158 is a Mn(2+) binding site. An N-linked (GlcNAc...) asparagine glycan is attached at N163. Residue H170 coordinates Mn(2+). N272 carries N-linked (GlcNAc...) asparagine glycosylation.

The protein belongs to the leguminous lectin family.

The sequence is that of Truncated lectin 2 (LEC2) from Medicago truncatula (Barrel medic).